A 181-amino-acid chain; its full sequence is MFKATTILAYKGKNGSIIGGDGQVTFGNTVLKGTATKIRKIGKDGKVLAGFAGSTTDAFNLFDMFEKCLESAKNDLLKAAVDFSKEWRKDKYLRKLEAMMLVLDREHIFLLSGVGDVVEPDDGKIAAIGSGGNYALSAARALDKFGNLNEEELVKESLKIASEICIYTNNHIKTYAIWDNK.

The active site involves threonine 5. The Na(+) site is built by serine 162, cysteine 165, and threonine 168.

Belongs to the peptidase T1B family. HslV subfamily. A double ring-shaped homohexamer of HslV is capped on each side by a ring-shaped HslU homohexamer. The assembly of the HslU/HslV complex is dependent on binding of ATP.

The protein resides in the cytoplasm. It carries out the reaction ATP-dependent cleavage of peptide bonds with broad specificity.. With respect to regulation, allosterically activated by HslU binding. Functionally, protease subunit of a proteasome-like degradation complex believed to be a general protein degrading machinery. This Campylobacter hominis (strain ATCC BAA-381 / DSM 21671 / CCUG 45161 / LMG 19568 / NCTC 13146 / CH001A) protein is ATP-dependent protease subunit HslV.